The chain runs to 213 residues: Glycerol-3-phosphate acyltransferase (213 aa).

Helical transmembrane passes span 4-24 (IILLLIASYLLGAIPFGLWIG), 48-68 (ILGVKAGISVFAFDLLKGTLA), 71-91 (LPLFFHINGVSPLIFGLLAVI), 113-133 (VILGFSPLFLIYLLVVFIIVL), 144-164 (VIGAVFALLGILIFPSIGFIL), and 165-185 (TSYDLLFSIIIFVLAIIIILR).

It belongs to the PlsY family. In terms of assembly, probably interacts with PlsX.

The protein resides in the cell membrane. It carries out the reaction an acyl phosphate + sn-glycerol 3-phosphate = a 1-acyl-sn-glycero-3-phosphate + phosphate. It participates in lipid metabolism; phospholipid metabolism. Catalyzes the transfer of an acyl group from acyl-phosphate (acyl-PO(4)) to glycerol-3-phosphate (G3P) to form lysophosphatidic acid (LPA). This enzyme utilizes acyl-phosphate as fatty acyl donor, but not acyl-CoA or acyl-ACP. This Lactococcus lactis subsp. lactis (strain IL1403) (Streptococcus lactis) protein is Glycerol-3-phosphate acyltransferase.